The primary structure comprises 154 residues: AP-1 complex subunit sigma-3 (154 aa).

The protein belongs to the adaptor complexes small subunit family. Adaptor protein complex 1 (AP-1) is a heterotetramer composed of two large adaptins (gamma-type subunit AP1G1 and beta-type subunit AP1B1), a medium adaptin (mu-type subunit AP1M1 or AP1M2) and a small adaptin (sigma-type subunit AP1S1 or AP1S2 or AP1S3).

It is found in the golgi apparatus. The protein resides in the cytoplasmic vesicle membrane. Its subcellular location is the membrane. It localises to the clathrin-coated pit. Functionally, subunit of clathrin-associated adaptor protein complex 1 that plays a role in protein sorting in the late-Golgi/trans-Golgi network (TGN) and/or endosomes. The AP complexes mediate both the recruitment of clathrin to membranes and the recognition of sorting signals within the cytosolic tails of transmembrane cargo molecules. Involved in TLR3 trafficking. The protein is AP-1 complex subunit sigma-3 (Ap1s3) of Mus musculus (Mouse).